Reading from the N-terminus, the 229-residue chain is MLICIPDVLSKDEVAEFRRIMDAAEWEDGRSTAGAQSAMVKRNEQLPPDGEAARLLGQRVITALTKNPRFLSAAIPLQIFPPLFNRYTSSRGDHFGIHVDNAVRGDPLTGLRIRTDLSMTLFLAEPDTYDGGELVIEDTYGSHEVKLPAGHAVLYPSSSLHMVTPVTRGARVASFFWMQSMIRDAHVRSMIFDLDTTIQSLTERFGRDDPDAVKLTGIYHNLIRQWAEV.

The 103-residue stretch at 78–180 folds into the Fe2OG dioxygenase domain; sequence QIFPPLFNRY…RVASFFWMQS (103 aa). Fe cation contacts are provided by H98, D100, and H161. Residue R171 participates in 2-oxoglutarate binding.

Fe(2+) serves as cofactor. Requires L-ascorbate as cofactor.

The sequence is that of PKHD-type hydroxylase BRADO4652 from Bradyrhizobium sp. (strain ORS 278).